The following is a 526-amino-acid chain: Dual specificity tyrosine-phosphorylation-regulated kinase 2 (526 aa).

Composition is skewed to polar residues over residues 30–40 and 60–70; these read TTQPNGLTTLG and GSSSSLKSTDG. A disordered region spans residues 30–76; the sequence is TTQPNGLTTLGKSGLPVVQDRQSESAHRRQGSSSSLKSTDGTGKVKA. A Phosphothreonine; by ATM modification is found at T31. The short motif at 114 to 116 is the Nuclear localization signal element; it reads KKR. In terms of domain architecture, Protein kinase spans 147-460; sequence YEVLKVIGKG…PSQALRHPWL (314 aa). Residues 153 to 161, K176, and 226 to 229 each bind ATP; these read IGKGSFGQV and FELL. The active-site Proton acceptor is the D273. Residue Y307 is modified to Phosphotyrosine. Position 367 is a phosphoserine; by ATM (S367). Positions 462 to 499 are disordered; the sequence is RRLPKPPTGEKASAKRITESTGAITSISKLPPTSSSAS. Positions 480 to 499 are enriched in polar residues; that stretch reads ESTGAITSISKLPPTSSSAS.

It belongs to the protein kinase superfamily. CMGC Ser/Thr protein kinase family. MNB/DYRK subfamily. In terms of assembly, interacts with MDM2. Requires Mg(2+) as cofactor. The cofactor is Mn(2+). In terms of processing, phosphorylated on serine/threonine residues. Phosphorylation on Thr-31 and Ser-367 by ATM in response to genotoxic stress disrupts MDM2 binding and prevents MDM2-mediated ubiquitination and subsequent proteasome degradation, thus promoting p53/TP53-mediated apoptosis. Post-translationally, ubiquitination in nucleus by MDM2 in normal conditions leads to proteasome degradation.

The protein localises to the cytoplasm. Its subcellular location is the nucleus. It carries out the reaction L-seryl-[protein] + ATP = O-phospho-L-seryl-[protein] + ADP + H(+). The catalysed reaction is L-threonyl-[protein] + ATP = O-phospho-L-threonyl-[protein] + ADP + H(+). It catalyses the reaction L-tyrosyl-[protein] + ATP = O-phospho-L-tyrosyl-[protein] + ADP + H(+). Autophosphorylates on tyrosine residues. Its function is as follows. Serine/threonine-protein kinase involved in the control of mitotic transition and the regulation of cellular growth and/or development. The polypeptide is Dual specificity tyrosine-phosphorylation-regulated kinase 2 (Gallus gallus (Chicken)).